The sequence spans 233 residues: Large ribosomal subunit protein uL1 (233 aa).

It belongs to the universal ribosomal protein uL1 family. Part of the 50S ribosomal subunit.

Functionally, binds directly to 23S rRNA. The L1 stalk is quite mobile in the ribosome, and is involved in E site tRNA release. Its function is as follows. Protein L1 is also a translational repressor protein, it controls the translation of the L11 operon by binding to its mRNA. The chain is Large ribosomal subunit protein uL1 from Vibrio vulnificus (strain CMCP6).